The chain runs to 137 residues: Proofreading thioesterase EntH (137 aa).

The active-site Nucleophile or proton acceptor is glutamate 63.

The protein belongs to the thioesterase PaaI family. In terms of assembly, homotetramer. Dimer of dimers. Interacts specifically with the aryl carrier protein (ArCP) domain of EntB.

It is found in the cytoplasm. The protein operates within siderophore biosynthesis; enterobactin biosynthesis. In terms of biological role, required for optimal enterobactin synthesis. Acts as a proofreading enzyme that prevents EntB misacylation by hydrolyzing the thioester bound existing between EntB and wrongly charged molecules. This Citrobacter koseri (strain ATCC BAA-895 / CDC 4225-83 / SGSC4696) protein is Proofreading thioesterase EntH.